A 227-amino-acid polypeptide reads, in one-letter code: Urease accessory protein UreF (227 aa).

This sequence belongs to the UreF family. In terms of assembly, ureD, UreF and UreG form a complex that acts as a GTP-hydrolysis-dependent molecular chaperone, activating the urease apoprotein by helping to assemble the nickel containing metallocenter of UreC. The UreE protein probably delivers the nickel.

It localises to the cytoplasm. In terms of biological role, required for maturation of urease via the functional incorporation of the urease nickel metallocenter. This chain is Urease accessory protein UreF, found in Actinobacillus pleuropneumoniae (Haemophilus pleuropneumoniae).